Reading from the N-terminus, the 310-residue chain is ADP-L-glycero-D-manno-heptose-6-epimerase (310 aa).

Residues 10-11 (FI), 31-32 (DN), lysine 38, lysine 53, 75-79 (EGACS), and asparagine 92 contribute to the NADP(+) site. The Proton acceptor role is filled by tyrosine 140. Position 144 (lysine 144) interacts with NADP(+). Substrate is bound at residue asparagine 169. 2 residues coordinate NADP(+): valine 170 and lysine 178. The active-site Proton acceptor is lysine 178. Residues glycine 180, histidine 187, 201 to 204 (FAGS), arginine 209, and tyrosine 272 each bind substrate.

This sequence belongs to the NAD(P)-dependent epimerase/dehydratase family. HldD subfamily. In terms of assembly, homopentamer. NADP(+) serves as cofactor.

The catalysed reaction is ADP-D-glycero-beta-D-manno-heptose = ADP-L-glycero-beta-D-manno-heptose. It functions in the pathway nucleotide-sugar biosynthesis; ADP-L-glycero-beta-D-manno-heptose biosynthesis; ADP-L-glycero-beta-D-manno-heptose from D-glycero-beta-D-manno-heptose 7-phosphate: step 4/4. Functionally, catalyzes the interconversion between ADP-D-glycero-beta-D-manno-heptose and ADP-L-glycero-beta-D-manno-heptose via an epimerization at carbon 6 of the heptose. The polypeptide is ADP-L-glycero-D-manno-heptose-6-epimerase (Sodalis glossinidius (strain morsitans)).